A 124-amino-acid chain; its full sequence is Snake venom vascular endothelial growth factor toxin apiscin (124 aa).

A signal peptide spans 1-24; sequence MAAYLLAVAILFCIQGWPSGTVQG. The residue at position 25 (glutamine 25) is a Pyrrolidone carboxylic acid. 3 disulfide bridges follow: cysteine 38–cysteine 80, cysteine 69–cysteine 115, and cysteine 73–cysteine 117.

This sequence belongs to the PDGF/VEGF growth factor family. Snake venom VEGF subfamily. In terms of assembly, homodimer; disulfide-linked. Interacts with VEGF receptor-1 (FLT1) with a high affinity, whereas it binds to VEGF receptor-2 (KDR) with a low affinity. Does not bind VEGF receptor-3 (FLT4). Expressed by the venom gland.

The protein localises to the secreted. Functionally, snake venom VEGFs that may contribute to venom dispersion and prey subjugation by inducing vascular permeability and hypotension. This protein induces an increase in capillary permeability after intradermal injection, as well as a drastic hypotensive effect after intravenous injection. The hypotension is mediated by nitric oxide (NO), which is produced by VEGF-activated endothelium NO synthase. Also induces angiogenesis in vitro. Like other crotalid VEGFs, this protein interacts with VEGF receptor-1 (FLT1) with a high affinity, whereas it binds to VEGF receptor-2 (KDR) with a low affinity. This Agkistrodon piscivorus piscivorus (Eastern cottonmouth) protein is Snake venom vascular endothelial growth factor toxin apiscin.